A 292-amino-acid chain; its full sequence is Fat storage-inducing transmembrane protein 1 (292 aa).

Residues 1 to 18 (MERGPVVGAGLGAGARIQ) are Lumenal-facing. The helical transmembrane segment at 19–39 (ALLGCLLKVLLWVASALLYFG) threads the bilayer. At 40 to 54 (SEQAARLLGSPCLRR) the chain is on the cytoplasmic side. A helical transmembrane segment spans residues 55-75 (LYHAWLAAVVIFGPLLQFHVN). The Lumenal segment spans residues 76-94 (PRTIFASHGNFFNIKFVNS). A helical membrane pass occupies residues 95 to 115 (AWGWTCTFLGGFVLLVVFLAT). The Cytoplasmic portion of the chain corresponds to 116-141 (RRVAVTARHLSRLVVGAAVWRGAGRA). The helical transmembrane segment at 142-162 (FLLIEDLTGSCFEPLPQGLLL) threads the bilayer. Over 163–187 (HELPDRRSCLAAGHQWRGYTVSSHT) the chain is Lumenal. His-186 is an active-site residue. Residues 188-208 (FLLTFCCLLMAEEAAVFAKYL) form a helical membrane-spanning segment. Topologically, residues 209–220 (AHGLPAGAPLRL) are cytoplasmic. The chain crosses the membrane as a helical span at residues 221 to 241 (VFLLNVLLLGLWNFLLLCTVI). Residues 242–249 (YFHQYTHK) lie on the Lumenal side of the membrane. His-244 is an active-site residue. The chain crosses the membrane as a helical span at residues 250-270 (VVGAAVGTFAWYLTYGSWYHQ). Residues 271–292 (PWSPGSPGHGLFPRPHSSRKHN) lie on the Cytoplasmic side of the membrane.

Belongs to the FIT family. FIT1 subfamily. Primarily expressed in heart and skeletal muscle.

The protein resides in the endoplasmic reticulum membrane. Plays an important role in the formation of lipid droplets (LDs) which are storage organelles at the center of lipid and energy homeostasis. Directly binds to diacylglycerol (DAGs) and triacylglycerol. In Homo sapiens (Human), this protein is Fat storage-inducing transmembrane protein 1.